A 299-amino-acid chain; its full sequence is Taste receptor type 2 member 4 (299 aa).

The Extracellular portion of the chain corresponds to 1–9; sequence MLRLFYFSA. A helical transmembrane segment spans residues 10 to 30; it reads VIASVILNFVGIIMNLFITVV. Residues 31–46 are Cytoplasmic-facing; that stretch reads NCKTWVKSHRISSSDR. The helical transmembrane segment at 47-67 threads the bilayer; the sequence is ILFSLGITRFLMLGLFLVNTI. At 68–81 the chain is on the extracellular side; the sequence is YFVSSNMERSVYLS. A helical transmembrane segment spans residues 82 to 102; it reads AFFVLCFMFLDSSSLWFVTLL. Residues 103–131 lie on the Cytoplasmic side of the membrane; that stretch reads NILYCVKITNFQHSVFLLLKRSISPKIPR. The chain crosses the membrane as a helical span at residues 132 to 152; it reads LLLAFVLISAFTTCLYITLSQ. Residues 153–172 are Extracellular-facing; it reads ASPFPELVTTRNNTSFNISE. N-linked (GlcNAc...) asparagine glycosylation is found at N164, N165, and N169. Residues 173 to 193 traverse the membrane as a helical segment; that stretch reads GILSLVVSLVLSSSLQFIINV. Residues 194–230 are Cytoplasmic-facing; it reads TSASLLIHSLRRHIQKMQKNATGFWNPQMEAHVGAMK. Residues 231 to 251 traverse the membrane as a helical segment; the sequence is LMVYFLILYIPYSVATLVQYL. The Extracellular segment spans residues 252–262; the sequence is PFYAGMDMGTK. The helical transmembrane segment at 263–283 threads the bilayer; sequence SICLIFATLYSPGHSVLIIIT. The Cytoplasmic segment spans residues 284–299; sequence HPKLKTTAKKILCFKK.

Belongs to the G-protein coupled receptor T2R family.

The protein resides in the membrane. The protein localises to the cell projection. Its subcellular location is the cilium membrane. Its function is as follows. Gustducin-coupled receptor implicated in the perception of bitter compounds in the oral cavity and the gastrointestinal tract. Signals through PLCB2 and the calcium-regulated cation channel TRPM5. In airway epithelial cells, binding of denatonium increases the intracellular calcium ion concentration and stimulates ciliary beat frequency. This is Taste receptor type 2 member 4 (TAS2R4) from Gorilla gorilla gorilla (Western lowland gorilla).